A 477-amino-acid chain; its full sequence is Trigger factor (477 aa).

The 86-residue stretch at 169 to 254 folds into the PPIase FKBP-type domain; it reads EDRVTIDYLG…VKEVAKPNEL (86 aa). The segment at 435 to 477 is disordered; sequence VSKEELTAEDEDAASEAKPAKKAAAKKKAAPKKKAEEGKSEEA. Positions 454 to 466 are enriched in basic residues; sequence AKKAAAKKKAAPK. Residues 467–477 show a composition bias toward basic and acidic residues; that stretch reads KKAEEGKSEEA.

It belongs to the FKBP-type PPIase family. Tig subfamily.

The protein resides in the cytoplasm. The enzyme catalyses [protein]-peptidylproline (omega=180) = [protein]-peptidylproline (omega=0). In terms of biological role, involved in protein export. Acts as a chaperone by maintaining the newly synthesized protein in an open conformation. Functions as a peptidyl-prolyl cis-trans isomerase. This chain is Trigger factor, found in Brucella suis biovar 1 (strain 1330).